The following is a 262-amino-acid chain: Ribosomal RNA small subunit methyltransferase A (262 aa).

Residues N14, L16, G41, E62, D87, and N109 each contribute to the S-adenosyl-L-methionine site.

This sequence belongs to the class I-like SAM-binding methyltransferase superfamily. rRNA adenine N(6)-methyltransferase family. RsmA subfamily.

It localises to the cytoplasm. The enzyme catalyses adenosine(1518)/adenosine(1519) in 16S rRNA + 4 S-adenosyl-L-methionine = N(6)-dimethyladenosine(1518)/N(6)-dimethyladenosine(1519) in 16S rRNA + 4 S-adenosyl-L-homocysteine + 4 H(+). Functionally, specifically dimethylates two adjacent adenosines (A1518 and A1519) in the loop of a conserved hairpin near the 3'-end of 16S rRNA in the 30S particle. May play a critical role in biogenesis of 30S subunits. The polypeptide is Ribosomal RNA small subunit methyltransferase A (Francisella tularensis subsp. holarctica (strain FTNF002-00 / FTA)).